A 109-amino-acid chain; its full sequence is Phosphoribosyl-AMP cyclohydrolase (109 aa).

Aspartate 80 contributes to the Mg(2+) binding site. Position 81 (cysteine 81) interacts with Zn(2+). Residues aspartate 82 and aspartate 84 each coordinate Mg(2+). Zn(2+)-binding residues include cysteine 97 and cysteine 104.

It belongs to the PRA-CH family. As to quaternary structure, homodimer. Mg(2+) is required as a cofactor. Requires Zn(2+) as cofactor.

Its subcellular location is the cytoplasm. The enzyme catalyses 1-(5-phospho-beta-D-ribosyl)-5'-AMP + H2O = 1-(5-phospho-beta-D-ribosyl)-5-[(5-phospho-beta-D-ribosylamino)methylideneamino]imidazole-4-carboxamide. It functions in the pathway amino-acid biosynthesis; L-histidine biosynthesis; L-histidine from 5-phospho-alpha-D-ribose 1-diphosphate: step 3/9. Functionally, catalyzes the hydrolysis of the adenine ring of phosphoribosyl-AMP. The protein is Phosphoribosyl-AMP cyclohydrolase of Clostridium beijerinckii (strain ATCC 51743 / NCIMB 8052) (Clostridium acetobutylicum).